A 510-amino-acid polypeptide reads, in one-letter code: Bifunctional pantoate ligase/cytidylate kinase (510 aa).

Residues 1 to 276 (MKKVIIRKTE…CGETRLIDHV (276 aa)) form a pantoate--beta-alanine ligase region. 29 to 36 (MGNLHNGH) is an ATP binding site. The Proton donor role is filled by H36. Position 61 (Q61) interacts with (R)-pantoate. Residue Q61 participates in beta-alanine binding. 150-153 (GEKD) serves as a coordination point for ATP. Q156 provides a ligand contact to (R)-pantoate. 187-190 (LSSR) contributes to the ATP binding site. A cytidylate kinase region spans residues 277–510 (FLMKRRPIIA…DKIPKETEIK (234 aa)).

The protein in the N-terminal section; belongs to the pantothenate synthetase family. It in the C-terminal section; belongs to the cytidylate kinase family. Type 1 subfamily.

The protein localises to the cytoplasm. The enzyme catalyses (R)-pantoate + beta-alanine + ATP = (R)-pantothenate + AMP + diphosphate + H(+). It carries out the reaction CMP + ATP = CDP + ADP. The catalysed reaction is dCMP + ATP = dCDP + ADP. It functions in the pathway cofactor biosynthesis; (R)-pantothenate biosynthesis; (R)-pantothenate from (R)-pantoate and beta-alanine: step 1/1. In terms of biological role, catalyzes the condensation of pantoate with beta-alanine in an ATP-dependent reaction via a pantoyl-adenylate intermediate. Functionally, catalyzes the transfer of a phosphate group from ATP to either CMP or dCMP to form CDP or dCDP and ADP, respectively. The protein is Bifunctional pantoate ligase/cytidylate kinase of Prochlorococcus marinus (strain MIT 9215).